The following is a 181-amino-acid chain: Ribonuclease HII (181 aa).

The RNase H type-2 domain maps to 1–181 (MICGIDEVGR…SLHRRNFKLI (181 aa)). A divalent metal cation contacts are provided by Asp-6, Glu-7, and Asp-98.

The protein belongs to the RNase HII family. Mn(2+) serves as cofactor. Mg(2+) is required as a cofactor.

Its subcellular location is the cytoplasm. It catalyses the reaction Endonucleolytic cleavage to 5'-phosphomonoester.. In terms of biological role, endonuclease that specifically degrades the RNA of RNA-DNA hybrids. This is Ribonuclease HII from Borrelia garinii subsp. bavariensis (strain ATCC BAA-2496 / DSM 23469 / PBi) (Borreliella bavariensis).